Consider the following 24-residue polypeptide: U1-poneritoxin-Ni2a (24 aa).

This sequence belongs to the ponericin-L family. As to expression, expressed by the venom gland.

It localises to the secreted. Has a broad spectrum of activity against both Gram-positive and Gram-negative bacteria. Is inactive against yeast, erythrocytes, and insects. The sequence is that of U1-poneritoxin-Ni2a from Neoponera inversa (Ant).